The following is a 231-amino-acid chain: 2-phospho-L-lactate guanylyltransferase (231 aa).

Belongs to the CofC family. Homodimer.

The enzyme catalyses (2S)-2-phospholactate + GTP + H(+) = (2S)-lactyl-2-diphospho-5'-guanosine + diphosphate. The protein operates within cofactor biosynthesis; coenzyme F420 biosynthesis. In terms of biological role, guanylyltransferase that catalyzes the activation of (2S)-2-phospholactate (2-PL) as (2S)-lactyl-2-diphospho-5'-guanosine, via the condensation of 2-PL with GTP. It is involved in the biosynthesis of coenzyme F420, a hydride carrier cofactor. The protein is 2-phospho-L-lactate guanylyltransferase of Haloterrigena turkmenica (strain ATCC 51198 / DSM 5511 / JCM 9101 / NCIMB 13204 / VKM B-1734 / 4k) (Halococcus turkmenicus).